We begin with the raw amino-acid sequence, 533 residues long: Probable nucleolar protein 5-1 (533 aa).

Residues 280 to 398 (IAPNLTALVG…LEARLRTLEG (119 aa)) enclose the Nop domain. A disordered region spans residues 402–533 (GRLSGSAKGK…EKKKKKKTEV (132 aa)). Residues 412 to 423 (PKIEVYDKDKKK) are compositionally biased toward basic and acidic residues. Polar residues predominate over residues 433 to 450 (KTYNTAADSLLQTPTVDS). Basic and acidic residues-rich tracts occupy residues 474–489 (TEEP…KTEA) and 515–524 (MPAKKKEKSE).

Belongs to the NOP5/NOP56 family.

It localises to the nucleus. It is found in the nucleolus. Required for 60S ribosomal subunit biogenesis. The polypeptide is Probable nucleolar protein 5-1 (NOP5-1) (Arabidopsis thaliana (Mouse-ear cress)).